A 477-amino-acid polypeptide reads, in one-letter code: UDP-N-acetylmuramate--L-alanine ligase (477 aa).

Residue Gly-122–Thr-128 participates in ATP binding.

It belongs to the MurCDEF family.

It is found in the cytoplasm. It carries out the reaction UDP-N-acetyl-alpha-D-muramate + L-alanine + ATP = UDP-N-acetyl-alpha-D-muramoyl-L-alanine + ADP + phosphate + H(+). Its pathway is cell wall biogenesis; peptidoglycan biosynthesis. Its function is as follows. Cell wall formation. This Xylella fastidiosa (strain 9a5c) protein is UDP-N-acetylmuramate--L-alanine ligase.